The sequence spans 107 residues: Small ribosomal subunit protein uS10m (107 aa).

This sequence belongs to the universal ribosomal protein uS10 family.

Its subcellular location is the mitochondrion. The chain is Small ribosomal subunit protein uS10m (RPS10) from Prototheca wickerhamii.